A 298-amino-acid polypeptide reads, in one-letter code: GTP-binding protein REM 1 (298 aa).

A disordered region spans residues 1–73 (MTLNTEQEAK…DDWSSESSDS (73 aa)). Positions 35-55 (TVPSTQSQHPRLGQSASLNPP) are enriched in polar residues. Ser-51 bears the Phosphoserine mark. The segment covering 63–73 (PDDWSSESSDS) has biased composition (low complexity). Residues 87 to 94 (GDPGVGKT) and 195 to 198 (NKAD) each bind GTP. The interval 268 to 287 (ARRFLARLTARSARRRALKA) is calmodulin-binding.

It belongs to the small GTPase superfamily. RGK family. In terms of assembly, in vitro, interacts with calmodulin in a calcium-dependent manner. In terms of tissue distribution, most highly expressed in the endothelial lining of the blood vessels in uterus and heart. Lower levels found in spleen, lymph node, kidney and testis. Also found in cells with secretory function such as the islets of Langerhans, lobule/duct epithelium in the breast, bile duct epithelium in the liver, surface epithelium in the endometrial glands of the uterus, colon mucosa and acinar cells in the pancreas and the prostate.

Functionally, promotes endothelial cell sprouting and actin cytoskeletal reorganization. May be involved in angiogenesis. May function in Ca(2+) signaling. This Homo sapiens (Human) protein is GTP-binding protein REM 1 (REM1).